A 519-amino-acid polypeptide reads, in one-letter code: Golgi-associated kinase 1B (519 aa).

Residues 1–37 are Cytoplasmic-facing; sequence MTCPDKPGQLINWFICSLCVPRVRKLWSSRRPRTRRN. A helical; Signal-anchor for type II membrane protein transmembrane segment spans residues 38 to 55; the sequence is LLLGTACAIYLGFLVSQV. The Extracellular portion of the chain corresponds to 56-519; sequence GRASLQHGQA…HGVKVLPMNE (464 aa). The tract at residues 62–103 is disordered; that stretch reads HGQAAEKGPHRSRDTAEPSFPEIPLDGTLAPPESQGNGSTLQ. The span at 68 to 77 shows a compositional bias: basic and acidic residues; that stretch reads KGPHRSRDTA. N-linked (GlcNAc...) asparagine glycosylation is present at N289.

It belongs to the GASK family.

The protein resides in the golgi apparatus membrane. This Homo sapiens (Human) protein is Golgi-associated kinase 1B.